The chain runs to 145 residues: Hemoglobin subunit beta (145 aa).

The region spanning 1–145 (MLTAEEKAAV…VANALAHRYH (145 aa)) is the Globin domain. Position 11 is a phosphothreonine (threonine 11). Serine 43 is modified (phosphoserine). An N6-acetyllysine modification is found at lysine 58. Histidine 62 provides a ligand contact to heme b. Lysine 81 carries the post-translational modification N6-acetyllysine. Heme b is bound at residue histidine 91. Cysteine 92 is modified (S-nitrosocysteine).

This sequence belongs to the globin family. In terms of assembly, heterotetramer of two alpha chains and two beta chains. In terms of tissue distribution, red blood cells.

In terms of biological role, involved in oxygen transport from the lung to the various peripheral tissues. This Bos gaurus frontalis (Domestic gayal) protein is Hemoglobin subunit beta (HBB).